Consider the following 448-residue polypeptide: MSTSTPVTEEPRSSSQMTISASTQELAELINIHLGDLRPEEPSWRVADSPISGRGIFATREIAAGEELFREHTLLVGPTAHRSMNLRTCTLCYRLIPGSTDSAALCPAGCGLPVCSECRDSTRHDLECKLFRKWKPLESQRIEPRALRILSVVRCFFLDEASRKLLYAMQANMDRYYMQEVQRAADCFEHFPREQDMLDYFYRTICAFNTNAFESRSNVDGHEVLVRALFPLAGLLNHQCTPNAAHHFENGETIVVCATERIPAGAEITMSYAKLLWSTLARKIFLGMTKHFICKCVRCQDPTENGTYLSALFCREQGCRGLVIPVQTRTLQPDWRCITCENVFPHAKMAKYQDFALNTINNRINSCSVQDMIHFINELCPRFCPSSNYVLIEAKLNVIWRMTRFDHEEYTPEEMGHMDRYREEVLAILHKLGAGECTLKKLITGEIQ.

Residues 42–273 form the SET domain; it reads PSWRVADSPI…AGAEITMSYA (232 aa).

This sequence belongs to the class V-like SAM-binding methyltransferase superfamily.

The sequence is that of SET domain-containing protein SmydA-8, isoform B from Drosophila melanogaster (Fruit fly).